The primary structure comprises 688 residues: Polyribonucleotide nucleotidyltransferase (688 aa).

Mg(2+)-binding residues include aspartate 484 and aspartate 490. A KH domain is found at 550-609 (PTTEIFNVAPDKIVEIIGQGGRVIKEIVEKFEVKIDLNKPSGEVKIMGNKERVLKTKEFI). Residues 626-688 (DEVLEAQVKR…NKGKIALDLA (63 aa)) form the S1 motif domain.

This sequence belongs to the polyribonucleotide nucleotidyltransferase family. Mg(2+) serves as cofactor.

Its subcellular location is the cytoplasm. It catalyses the reaction RNA(n+1) + phosphate = RNA(n) + a ribonucleoside 5'-diphosphate. Its function is as follows. Involved in mRNA degradation. Catalyzes the phosphorolysis of single-stranded polyribonucleotides processively in the 3'- to 5'-direction. The polypeptide is Polyribonucleotide nucleotidyltransferase (Helicobacter pylori (strain HPAG1)).